We begin with the raw amino-acid sequence, 101 residues long: NAD(P)H-quinone oxidoreductase subunit 4L, chloroplastic (101 aa).

3 consecutive transmembrane segments (helical) span residues 2 to 22, 32 to 52, and 61 to 81; these read ILEH…YGLI, MCLE…SDFF, and IFCI…LAIV.

It belongs to the complex I subunit 4L family. As to quaternary structure, NDH is composed of at least 16 different subunits, 5 of which are encoded in the nucleus.

It is found in the plastid. The protein resides in the chloroplast thylakoid membrane. The enzyme catalyses a plastoquinone + NADH + (n+1) H(+)(in) = a plastoquinol + NAD(+) + n H(+)(out). It carries out the reaction a plastoquinone + NADPH + (n+1) H(+)(in) = a plastoquinol + NADP(+) + n H(+)(out). Functionally, NDH shuttles electrons from NAD(P)H:plastoquinone, via FMN and iron-sulfur (Fe-S) centers, to quinones in the photosynthetic chain and possibly in a chloroplast respiratory chain. The immediate electron acceptor for the enzyme in this species is believed to be plastoquinone. Couples the redox reaction to proton translocation, and thus conserves the redox energy in a proton gradient. The protein is NAD(P)H-quinone oxidoreductase subunit 4L, chloroplastic of Arabis hirsuta (Hairy rock-cress).